The following is a 279-amino-acid chain: Large ribosomal subunit protein uL24m (279 aa).

The N-terminal 31 residues, 1–31 (MRDLRKLIPRLRGPGTNVLKMKKPLPLHMRT), are a transit peptide targeting the mitochondrion. Over residues 34–51 (REHLNKSDPTVKDDKSAK) the composition is skewed to basic and acidic residues. The disordered stretch occupies residues 34 to 56 (REHLNKSDPTVKDDKSAKPELPF). The 31-residue stretch at 70 to 100 (KGDYVYVHQGPLKGKWGRVVETNKYTNGITI) folds into the KOW domain. The tract at residues 185–204 (PRPKTEDKPKDPEGKLDTKN) is disordered. The segment covering 187-202 (PKTEDKPKDPEGKLDT) has biased composition (basic and acidic residues).

Belongs to the universal ribosomal protein uL24 family. Component of the mitochondrial large ribosomal subunit (mt-LSU). Mature yeast 74S mitochondrial ribosomes consist of a small (37S) and a large (54S) subunit. The 37S small subunit contains a 15S ribosomal RNA (15S mt-rRNA) and at least 32 different proteins. The 54S large subunit contains a 21S rRNA (21S mt-rRNA) and at least 45 different proteins. uL24m forms the wall of the exit tunnel.

The protein resides in the mitochondrion. Functionally, component of the mitochondrial ribosome (mitoribosome), a dedicated translation machinery responsible for the synthesis of mitochondrial genome-encoded proteins, including at least some of the essential transmembrane subunits of the mitochondrial respiratory chain. The mitoribosomes are attached to the mitochondrial inner membrane and translation products are cotranslationally integrated into the membrane. The chain is Large ribosomal subunit protein uL24m (mrpl40) from Schizosaccharomyces pombe (strain 972 / ATCC 24843) (Fission yeast).